A 182-amino-acid polypeptide reads, in one-letter code: Putative minor fimbrial subunit PmfF (182 aa).

An N-terminal signal peptide occupies residues 1-22 (MKNSIIKSAITCLLLLSPSTFA).

Belongs to the fimbrial protein family.

The protein resides in the fimbrium. The sequence is that of Putative minor fimbrial subunit PmfF (pmfF) from Proteus mirabilis (strain HI4320).